Consider the following 119-residue polypeptide: uncharacterized protein (119 aa).

The active site involves cysteine 13.

The protein belongs to the ArsC family.

This is an uncharacterized protein from Escherichia coli (strain K12).